Reading from the N-terminus, the 251-residue chain is Zinc import ATP-binding protein ZnuC (251 aa).

One can recognise an ABC transporter domain in the interval 5–220 (VSLENVSVSF…PEFISMFGPR (216 aa)). 37 to 44 (GPNGAGKS) serves as a coordination point for ATP.

The protein belongs to the ABC transporter superfamily. Zinc importer (TC 3.A.1.15.5) family. As to quaternary structure, the complex is composed of two ATP-binding proteins (ZnuC), two transmembrane proteins (ZnuB) and a solute-binding protein (ZnuA).

Its subcellular location is the cell inner membrane. The catalysed reaction is Zn(2+)(out) + ATP(in) + H2O(in) = Zn(2+)(in) + ADP(in) + phosphate(in) + H(+)(in). In terms of biological role, part of the ABC transporter complex ZnuABC involved in zinc import. Responsible for energy coupling to the transport system. The polypeptide is Zinc import ATP-binding protein ZnuC (Salmonella choleraesuis (strain SC-B67)).